The following is a 159-amino-acid chain: Aspartate carbamoyltransferase regulatory chain (159 aa).

Cys111, Cys116, Cys141, and Cys144 together coordinate Zn(2+).

Belongs to the PyrI family. As to quaternary structure, contains catalytic and regulatory chains. Zn(2+) serves as cofactor.

Its function is as follows. Involved in allosteric regulation of aspartate carbamoyltransferase. The protein is Aspartate carbamoyltransferase regulatory chain of Aeropyrum pernix (strain ATCC 700893 / DSM 11879 / JCM 9820 / NBRC 100138 / K1).